A 308-amino-acid chain; its full sequence is Prephenate dehydratase (308 aa).

The Prephenate dehydratase domain maps to 3-187 (RITYLGPEGT…AHTRFVLVGR (185 aa)). The 78-residue stretch at 201 to 278 (SVVLGLGNVP…EDVRYLGSWP (78 aa)) folds into the ACT domain.

As to quaternary structure, homodimer.

The enzyme catalyses prephenate + H(+) = 3-phenylpyruvate + CO2 + H2O. It participates in amino-acid biosynthesis; L-phenylalanine biosynthesis; phenylpyruvate from prephenate: step 1/1. This chain is Prephenate dehydratase (pheA), found in Mycobacteroides abscessus (strain ATCC 19977 / DSM 44196 / CCUG 20993 / CIP 104536 / JCM 13569 / NCTC 13031 / TMC 1543 / L948) (Mycobacterium abscessus).